The following is a 468-amino-acid chain: Argininosuccinate lyase (468 aa).

The protein belongs to the lyase 1 family. Argininosuccinate lyase subfamily.

Its subcellular location is the cytoplasm. The catalysed reaction is 2-(N(omega)-L-arginino)succinate = fumarate + L-arginine. It participates in amino-acid biosynthesis; L-arginine biosynthesis; L-arginine from L-ornithine and carbamoyl phosphate: step 3/3. This Paraburkholderia xenovorans (strain LB400) protein is Argininosuccinate lyase.